The chain runs to 108 residues: Small ribosomal subunit protein bS6 (108 aa).

The protein belongs to the bacterial ribosomal protein bS6 family.

Binds together with bS18 to 16S ribosomal RNA. The sequence is that of Small ribosomal subunit protein bS6 from Trichormus variabilis (strain ATCC 29413 / PCC 7937) (Anabaena variabilis).